We begin with the raw amino-acid sequence, 341 residues long: Myb-related transcription factor, partner of profilin (341 aa).

Residues 8-80 (VTRLRKPRFS…EVQKRWNDFK (73 aa)) form the Myb-like domain. Disordered stretches follow at residues 84 to 103 (KEKL…EEAM), 180 to 210 (LPHL…PSGV), and 309 to 341 (AEPP…WKNL). Residues 184–200 (TPSPDPSECPSPPPPGS) are compositionally biased toward pro residues. Positions 321–341 (NKRKRFGYLSQRKRRGRWKNL) are enriched in basic residues.

It localises to the nucleus. Its function is as follows. Transcriptional repressor; DNA-binding protein that specifically recognizes the core sequence 5'-YAAC[GT]G-3'. This chain is Myb-related transcription factor, partner of profilin (mypop), found in Xenopus laevis (African clawed frog).